The chain runs to 204 residues: MSSKLTDRQQQVLDCIRECLKDNGMAPTRAEIADIMGFQSKNAASDHLRALERKGYIKLHSDRSRGIQLLDHAYWGEEELPVVGKVAAGIPIEAIENVERTVPVPQGLFKQRPTYLLKVQGDSMVDAGIFDGDLIAVRKSNVARSGEIVVARIDEEVTVKTLKLNKSSATLLPANEAYEPIKVPADQLIIEGIFVGLIRDPNSF.

The segment at residues 29–49 (RAEIADIMGFQSKNAASDHLR) is a DNA-binding region (H-T-H motif). Active-site for autocatalytic cleavage activity residues include S123 and K160.

This sequence belongs to the peptidase S24 family. As to quaternary structure, homodimer.

It catalyses the reaction Hydrolysis of Ala-|-Gly bond in repressor LexA.. Its function is as follows. Represses a number of genes involved in the response to DNA damage (SOS response), including recA and lexA. In the presence of single-stranded DNA, RecA interacts with LexA causing an autocatalytic cleavage which disrupts the DNA-binding part of LexA, leading to derepression of the SOS regulon and eventually DNA repair. The chain is LexA repressor from Alcanivorax borkumensis (strain ATCC 700651 / DSM 11573 / NCIMB 13689 / SK2).